The following is a 179-amino-acid chain: D-glycero-beta-D-manno-heptose-1,7-bisphosphate 7-phosphatase (179 aa).

Catalysis depends on D7, which acts as the Nucleophile. Residues D7 and D9 each coordinate Mg(2+). Substrate is bound at residue D7. D9 functions as the Proton donor in the catalytic mechanism. Substrate is bound by residues 15 to 19 (DSDAF), 50 to 53 (TNQS), and R57. Residues C89, H91, C97, and C99 each contribute to the Zn(2+) site. Substrate is bound at residue R100. D126 contributes to the Mg(2+) binding site. R129 is a substrate binding site.

Monomer. It depends on Mg(2+) as a cofactor. The cofactor is Zn(2+).

It is found in the cytoplasm. The catalysed reaction is D-glycero-beta-D-manno-heptose 1,7-bisphosphate + H2O = D-glycero-beta-D-manno-heptose 1-phosphate + phosphate. Its pathway is nucleotide-sugar biosynthesis; ADP-L-glycero-beta-D-manno-heptose biosynthesis; ADP-L-glycero-beta-D-manno-heptose from D-glycero-beta-D-manno-heptose 7-phosphate: step 2/4. It functions in the pathway bacterial outer membrane biogenesis; LPS core biosynthesis. In terms of biological role, converts the D-glycero-beta-D-manno-heptose 1,7-bisphosphate (beta-HBP) intermediate into D-glycero-beta-D-manno-heptose 1-phosphate by removing the phosphate group at the C-7 position. This is D-glycero-beta-D-manno-heptose-1,7-bisphosphate 7-phosphatase from Bordetella bronchiseptica (strain ATCC BAA-588 / NCTC 13252 / RB50) (Alcaligenes bronchisepticus).